Consider the following 442-residue polypeptide: Chromosomal replication initiator protein DnaA (442 aa).

The interval 1–75 (MDAWPRCLER…GNGEVALAVG (75 aa)) is domain I, interacts with DnaA modulators. Residues 75–104 (GSRPRAPEPAPAAAAVPSAPQAAPMVPFAG) form a domain II region. The interval 105 to 322 (NLDSHYTFAN…GALNTLVARA (218 aa)) is domain III, AAA+ region. 4 residues coordinate ATP: G150, G152, K153, and T154. The segment at 323-442 (NFTGRSITVE…WEKLIRKLSE (120 aa)) is domain IV, binds dsDNA.

This sequence belongs to the DnaA family. As to quaternary structure, oligomerizes as a right-handed, spiral filament on DNA at oriC.

The protein localises to the cytoplasm. In terms of biological role, plays an essential role in the initiation and regulation of chromosomal replication. ATP-DnaA binds to the origin of replication (oriC) to initiate formation of the DNA replication initiation complex once per cell cycle. Binds the DnaA box (a 9 base pair repeat at the origin) and separates the double-stranded (ds)DNA. Forms a right-handed helical filament on oriC DNA; dsDNA binds to the exterior of the filament while single-stranded (ss)DNA is stabiized in the filament's interior. The ATP-DnaA-oriC complex binds and stabilizes one strand of the AT-rich DNA unwinding element (DUE), permitting loading of DNA polymerase. After initiation quickly degrades to an ADP-DnaA complex that is not apt for DNA replication. Binds acidic phospholipids. The sequence is that of Chromosomal replication initiator protein DnaA from Xanthomonas euvesicatoria pv. vesicatoria (strain 85-10) (Xanthomonas campestris pv. vesicatoria).